We begin with the raw amino-acid sequence, 139 residues long: Actin-depolymerizing factor 1 (139 aa).

The 135-residue stretch at 5–139 (ASGMAVCDEC…SMDIVKSRAL (135 aa)) folds into the ADF-H domain.

The protein belongs to the actin-binding proteins ADF family.

Functionally, actin-depolymerizing protein. Severs actin filaments (F-actin) and binds to actin monomers. This Oryza sativa subsp. japonica (Rice) protein is Actin-depolymerizing factor 1 (ADF1).